A 425-amino-acid polypeptide reads, in one-letter code: Protein let-756 (425 aa).

Disordered regions lie at residues 277–298 and 314–425; these read LEEK…LRKE and EEEL…QRYP. Residues 281–291 show a composition bias toward basic residues; sequence KRRREKKKRRR. The segment covering 329–340 has biased composition (polar residues); the sequence is ASTQTRYNRPQN. The span at 378-389 shows a compositional bias: basic residues; the sequence is HNSHHHHHHHPR. A compositionally biased stretch (polar residues) spans 395-425; it reads DPQQRHQSQQHYLAQTVSNPNRQNVNYQRYP.

Belongs to the heparin-binding growth factors family. In terms of assembly, interacts with pal-1. Expressed in pharynx, CAN neuron and body wall muscles.

The protein resides in the nucleus. The protein localises to the membrane. Functionally, required for larval development. Probably by binding receptor egl-15, negatively regulates membrane protrusion from body wall muscles during larval development. This Caenorhabditis elegans protein is Protein let-756 (let-756).